A 361-amino-acid polypeptide reads, in one-letter code: Tryptophan--tRNA ligase, mitochondrial (361 aa).

A mitochondrion-targeting transit peptide spans 1–16; that stretch reads MAKLPKITSLLPHSRV. ATP contacts are provided by residues Gln-21 and 27–30; that span reads HIGN. The 'HIGH' region motif lies at 22–30; that stretch reads PTGIPHIGN. Position 165 (Asp-165) interacts with L-tryptophan. ATP-binding positions include 177-179, 225-229, and Lys-228; these read GKD and KMSKS. A 'KMSKS' region motif is present at residues 225–229; the sequence is KMSKS.

It belongs to the class-I aminoacyl-tRNA synthetase family. As to quaternary structure, homodimer.

The protein localises to the mitochondrion matrix. The catalysed reaction is tRNA(Trp) + L-tryptophan + ATP = L-tryptophyl-tRNA(Trp) + AMP + diphosphate + H(+). In Schizosaccharomyces pombe (strain 972 / ATCC 24843) (Fission yeast), this protein is Tryptophan--tRNA ligase, mitochondrial.